The primary structure comprises 395 residues: DDB1- and CUL4-associated factor 4-like protein 2 (395 aa).

WD repeat units lie at residues 268–307 (SHDSAVTSLQILQDGQFLVSSDMTGTIKLWDLRATKCVTQ) and 312–351 (VNNSAYLPVHVNEEEGVVAAVGQDCYTRIWSLRHGHLLTT).

The polypeptide is DDB1- and CUL4-associated factor 4-like protein 2 (DCAF4L2) (Homo sapiens (Human)).